The following is a 355-amino-acid chain: 3-dehydroquinate synthase (355 aa).

Residues 67–72 (DGEIYK), 101–105 (GVIGD), 125–126 (TT), K138, K147, and 165–168 (FLNT) each bind NAD(+). Residues E180, H243, and H260 each coordinate Zn(2+).

The protein belongs to the sugar phosphate cyclases superfamily. Dehydroquinate synthase family. Requires NAD(+) as cofactor. It depends on Co(2+) as a cofactor. Zn(2+) serves as cofactor.

The protein localises to the cytoplasm. It carries out the reaction 7-phospho-2-dehydro-3-deoxy-D-arabino-heptonate = 3-dehydroquinate + phosphate. It functions in the pathway metabolic intermediate biosynthesis; chorismate biosynthesis; chorismate from D-erythrose 4-phosphate and phosphoenolpyruvate: step 2/7. In terms of biological role, catalyzes the conversion of 3-deoxy-D-arabino-heptulosonate 7-phosphate (DAHP) to dehydroquinate (DHQ). This is 3-dehydroquinate synthase from Buchnera aphidicola subsp. Baizongia pistaciae (strain Bp).